The chain runs to 533 residues: Probable anion transporter 4, chloroplastic (533 aa).

A run of 12 helical transmembrane segments spans residues 117–137 (MLALALALCNADRVVMSVAIV), 152–172 (IVQSSFLWGYLISPIAGGTLV), 179–199 (VVMAWGVALWSLATFLTPWAA), 203–223 (LWALLAARAMVGVAEGVALPC), 243–263 (IAMAGFQLGNVVGLMLSPILM), 267–287 (GIYGPFVIFGLSGFLWLLVWL), 342–362 (VIVANSMHSWGFFVILSWMPI), 376–396 (AWFSAVPWSMMAFTGYIAGFW), 417–437 (IGFIGPGIALIGLTTAKQPLV), 438–458 (ASAWLSLAVGLKSFSHLGFLI), 474–494 (MCLTAGTLAAIVGTVGAGFFV), and 502–522 (GFILLTAILYLLSALFYNIYA).

This sequence belongs to the major facilitator superfamily. Sodium/anion cotransporter (TC 2.A.1.14) family. In terms of tissue distribution, expressed in leaf veins and root tips.

The protein localises to the plastid. Its subcellular location is the chloroplast membrane. Its function is as follows. Inorganic phosphate and probable anion transporter. This chain is Probable anion transporter 4, chloroplastic (ANTR4), found in Arabidopsis thaliana (Mouse-ear cress).